Here is a 150-residue protein sequence, read N- to C-terminus: Protein NrdI (150 aa).

This sequence belongs to the NrdI family.

In terms of biological role, probably involved in ribonucleotide reductase function. In Mycobacterium avium (strain 104), this protein is Protein NrdI.